The primary structure comprises 594 residues: SHC-transforming protein 3 (594 aa).

The disordered stretch occupies residues 98 to 147; that stretch reads GSCSAPSLAAPDGSAPSAPRAPAMSAARKGRPGDEPLPRPPRGAPHASDQ. The segment covering 101-124 has biased composition (low complexity); it reads SAPSLAAPDGSAPSAPRAPAMSAA. A PID domain is found at 149 to 334; that stretch reads LGPGVTYVVK…LDEPWTEEEG (186 aa). Positions 335-498 are CH1; sequence DGSDHPYYNS…KMLEELQAET (164 aa). 2 disordered regions span residues 351–373 and 386–405; these read PPGG…AQFA and GDTF…SSDI. The segment covering 393-405 has biased composition (polar residues); the sequence is WQQTPLRQGSSDI. Ser-402 carries the post-translational modification Phosphoserine. Residues 499 to 590 enclose the SH2 domain; the sequence is WYQGEMSRKE…GSELCLQQPV (92 aa).

Interacts with the Trk receptors in a phosphotyrosine-dependent manner. Once activated, binds to GRB2. Interacts with activated EGF receptors. Tyrosine phosphorylated. Mainly expressed in brain. Hardly detectable in other tissues, except in pancreas. Highly expressed in the cerebral cortex, frontal and temporal lobes, occipital pole, hippocampus, caudate nucleus and amygdala. Expressed at low level in the cerebellum, medulla and spinal cord.

Its function is as follows. Signaling adapter that couples activated growth factor receptors to signaling pathway in neurons. Involved in the signal transduction pathways of neurotrophin-activated Trk receptors in cortical neurons. The chain is SHC-transforming protein 3 (SHC3) from Homo sapiens (Human).